We begin with the raw amino-acid sequence, 193 residues long: Thymidine kinase (193 aa).

Residues 9–16 and 87–90 each bind ATP; these read STMNAGKS and DEAN. The active-site Proton acceptor is Glu-88. Zn(2+) contacts are provided by Cys-145, Cys-147, Cys-182, and His-185.

This sequence belongs to the thymidine kinase family. Homotetramer.

The protein localises to the cytoplasm. It carries out the reaction thymidine + ATP = dTMP + ADP + H(+). The protein is Thymidine kinase of Agrobacterium fabrum (strain C58 / ATCC 33970) (Agrobacterium tumefaciens (strain C58)).